A 1343-amino-acid polypeptide reads, in one-letter code: DNA-directed RNA polymerase subunit beta (1343 aa).

Belongs to the RNA polymerase beta chain family. As to quaternary structure, the RNAP catalytic core consists of 2 alpha, 1 beta, 1 beta' and 1 omega subunit. When a sigma factor is associated with the core the holoenzyme is formed, which can initiate transcription.

It carries out the reaction RNA(n) + a ribonucleoside 5'-triphosphate = RNA(n+1) + diphosphate. DNA-dependent RNA polymerase catalyzes the transcription of DNA into RNA using the four ribonucleoside triphosphates as substrates. This chain is DNA-directed RNA polymerase subunit beta, found in Shewanella baltica (strain OS155 / ATCC BAA-1091).